Consider the following 138-residue polypeptide: Basic phospholipase A2 ammodytoxin A (138 aa).

Residues 1-16 form the signal peptide; that stretch reads MRTLWIVAVCLIGVEG. Cystine bridges form between cysteine 42/cysteine 131, cysteine 44/cysteine 60, cysteine 59/cysteine 111, cysteine 65/cysteine 138, cysteine 66/cysteine 104, cysteine 73/cysteine 97, and cysteine 91/cysteine 102. 3 residues coordinate Ca(2+): tyrosine 43, glycine 45, and glycine 47. Histidine 63 is a catalytic residue. Aspartate 64 is a binding site for Ca(2+). Aspartate 105 is a catalytic residue.

This sequence belongs to the phospholipase A2 family. Group II subfamily. D49 sub-subfamily. As to quaternary structure, monomer. Binds to calmodulin, coagulation factor X (F10), M-type PLA2 receptor (R-180). May also bind to 14-3-3 proteins gamma (YWHAG) and epsilon (YWHAE), and R25, a mitochondrial membrane protein. Ca(2+) is required as a cofactor. In terms of tissue distribution, expressed by the venom gland.

It localises to the secreted. Its subcellular location is the host cytoplasm. The protein localises to the host cytosol. It catalyses the reaction a 1,2-diacyl-sn-glycero-3-phosphocholine + H2O = a 1-acyl-sn-glycero-3-phosphocholine + a fatty acid + H(+). Snake venom phospholipase A2 (PLA2) that acts as a presynaptic neurotoxin, an inhibitor of blood coagulation, and has been found to bind with high affinity to intracellular proteins. The response of indirectly stimulated neuromuscular preparations to ammodytoxin (Atx) is triphasic. The first phase, the transient inhibition of the acetylcholine (ACh) release, starts soon after the addition of Atx and lasts for several minutes. This phase is probably independent of Atx enzymatic activity. The effect may be due to the specific binding of the toxin to presynaptic receptors. These receptors, called N-type receptors, are still unidentified. It is noteworthy that a neuronal isoform of the M-type PLA2 receptor (R180) has been identified as a high-affinity receptor for Atx in neuronal plasma membranes. It was demonstrated however that this receptor is not essential for expression of neurotoxicity by Atx. The second phase corresponds to an augmentation of neurotransmitter release. A peak is reached 10-20 minutes after exposure of the preparation to Atx and is followed by a gradual reduction. In this phase, the enzymatic activity of Atx of the mammalian is not significant. It is speculated that the increased release of neurotransmitter in this phase is induced by the interference of Atx with voltage-gated potassium channels. Measurements of ionic currents showed however that voltage-gated potassium channels are not affected by Atx. The third phase of the response of neuromuscular preparations to Atx, which corresponds to a complete and irreversible paralysis, is clearly dependent on the hydrolytic activity of the toxin. In addition to its presynaptic neurotoxicity, Atx shows an anticoagulant activity by binding with high affinity to activated coagulation factor X (F10) thus inhibiting the formation of the prothrombinase complex (FX/FV) and its activity (IC(50) is 20 nM). Surprisingly, Atx was discovered to bind intracellular proteins such as calmodulin (CaM) (IC(50) is 6 nM), 14-3-3 proteins gamma (YWHAG) and epsilon (YWHAE) (by similarity with AtxC), as well as R25 (by similarity with AtxC), a mitochondrial integral membrane protein found in cerebral cortex. These findings raised a doubt about the dogma of the exclusively extracellular action of PLA2s, defended by the potential instability of these molecules in the reducing environment of the eukaryotic cytosol coupled with their possible inability to act as enzymes in this cellular compartment, due to too low concentration of calcium ions. This hypothesis was challenged efficiently by demonstrating the internalization of AtxA into a culture cells, but still remains to be directly demonstrated in vivo. PLA2 catalyzes the calcium-dependent hydrolysis of the 2-acyl groups in 3-sn-phosphoglycerides. The chain is Basic phospholipase A2 ammodytoxin A from Vipera ammodytes ammodytes (Western sand viper).